Here is a 400-residue protein sequence, read N- to C-terminus: Enoyl-[acyl-carrier-protein] reductase [NADH] (400 aa).

NAD(+)-binding positions include 48-53 (GASTGY), 74-75 (FE), 111-112 (DA), and 139-140 (LA). Residue Tyr-225 coordinates substrate. Residue Tyr-235 is the Proton donor of the active site. NAD(+)-binding positions include Lys-244 and 273 to 275 (VVT).

The protein belongs to the TER reductase family. As to quaternary structure, monomer.

It carries out the reaction a 2,3-saturated acyl-[ACP] + NAD(+) = a (2E)-enoyl-[ACP] + NADH + H(+). It participates in lipid metabolism; fatty acid biosynthesis. In terms of biological role, involved in the final reduction of the elongation cycle of fatty acid synthesis (FAS II). Catalyzes the reduction of a carbon-carbon double bond in an enoyl moiety that is covalently linked to an acyl carrier protein (ACP). This Burkholderia cenocepacia (strain ATCC BAA-245 / DSM 16553 / LMG 16656 / NCTC 13227 / J2315 / CF5610) (Burkholderia cepacia (strain J2315)) protein is Enoyl-[acyl-carrier-protein] reductase [NADH].